Reading from the N-terminus, the 194-residue chain is Adenylate kinase isoenzyme 1 (194 aa).

Met-1 is modified (N-acetylmethionine). 18–23 (GSGKGT) contacts ATP. Ser-38 is subject to Phosphoserine. An NMP region spans residues 38–67 (STGDLLRAEVSSGSARGKKLSEIMEKGQLV). Residues Thr-39, Arg-44, 65–67 (QLV), 94–97 (GYPR), and Gln-101 contribute to the AMP site. Positions 131–141 (KRGETSGRVDD) are LID. Arg-132 contributes to the ATP binding site. Positions 138 and 149 each coordinate AMP. Gly-177 is a binding site for ATP.

Belongs to the adenylate kinase family. AK1 subfamily. Monomer. It depends on Mg(2+) as a cofactor.

The protein localises to the cytoplasm. The enzyme catalyses a ribonucleoside 5'-phosphate + ATP = a ribonucleoside 5'-diphosphate + ADP. It carries out the reaction AMP + ATP = 2 ADP. It catalyses the reaction dAMP + ATP = dADP + ADP. The catalysed reaction is dATP + AMP = dADP + ADP. The enzyme catalyses dAMP + dATP = 2 dADP. It carries out the reaction a 2'-deoxyribonucleoside 5'-diphosphate + ATP = a 2'-deoxyribonucleoside 5'-triphosphate + ADP. It catalyses the reaction a ribonucleoside 5'-diphosphate + ATP = a ribonucleoside 5'-triphosphate + ADP. The catalysed reaction is CDP + GTP = CTP + GDP. The enzyme catalyses GDP + ATP = GTP + ADP. It carries out the reaction UDP + ATP = UTP + ADP. It catalyses the reaction GTP + UDP = UTP + GDP. The catalysed reaction is dTDP + GTP = dTTP + GDP. The enzyme catalyses dCDP + GTP = dCTP + GDP. It carries out the reaction dGDP + ATP = dGTP + ADP. It catalyses the reaction dADP + GTP = dATP + GDP. The catalysed reaction is thiamine diphosphate + ADP = thiamine triphosphate + AMP. Functionally, catalyzes the reversible transfer of the terminal phosphate group between ATP and AMP. Also displays broad nucleoside diphosphate kinase activity. Plays an important role in cellular energy homeostasis and in adenine nucleotide metabolism. Also catalyzes at a very low rate the synthesis of thiamine triphosphate (ThTP) from thiamine diphosphate (ThDP) and ADP. The polypeptide is Adenylate kinase isoenzyme 1 (Oryctolagus cuniculus (Rabbit)).